We begin with the raw amino-acid sequence, 70 residues long: Conotoxin ArMKLT2-0112 (70 aa).

A signal peptide spans 1-22 (MKLTCVLIIAVLFLTACQLTTG). Residues 23–40 (EQKDHALRSTDKNSKLTR) constitute a propeptide that is removed on maturation. Gln-41 is subject to Pyrrolidone carboxylic acid. 3 disulfides stabilise this stretch: Cys-42–Cys-56, Cys-49–Cys-60, and Cys-55–Cys-67.

This sequence belongs to the conotoxin O1 superfamily. In terms of tissue distribution, expressed by the venom duct.

The protein resides in the secreted. The chain is Conotoxin ArMKLT2-0112 from Conus arenatus (Sand-dusted cone).